The sequence spans 298 residues: Rhodopsin (298 aa).

The Extracellular segment spans residues 1 to 15 (IHLHWYEYPPMNPMM). The helical transmembrane segment at 16-40 (YPLLLIFMLFTGILCLAGNFVTIWV) threads the bilayer. Residues 41 to 52 (FMNTKSLRTPAN) lie on the Cytoplasmic side of the membrane. A helical transmembrane segment spans residues 53–75 (LLVVNLAMSDFLMMFTMFPPMMV). The Extracellular segment spans residues 76–89 (TCYYHTWTLGPTFC). A disulfide bridge links cysteine 89 with cysteine 166. A helical membrane pass occupies residues 90-112 (QVYAFLGNLCGCASIWTMVFITF). A 'Ionic lock' involved in activated form stabilization motif is present at residues 113–115 (DRY). Over 113-131 (DRYNVIVKGVAGEPLSTKK) the chain is Cytoplasmic. The chain crosses the membrane as a helical span at residues 132-152 (ASLWILTIWVLSTTWCMAPFF). The Extracellular portion of the chain corresponds to 153–179 (GWNHYVPEGNLTGCGTDYLSEDILSRS). An N-linked (GlcNAc...) asparagine glycan is attached at asparagine 162. The chain crosses the membrane as a helical span at residues 180–201 (YLYVYSTWVYFLPLAITIYCYV). Residues 202–242 (FIIKAVAAHEKGMRDQAKKMGIKSLRNEEAQKTSAECRLAK) are Cytoplasmic-facing. The chain crosses the membrane as a helical span at residues 243-264 (IAMTTVALWFIAWTPYLLINWV). Over 265-275 (GMFARSYLSPV) the chain is Extracellular. A helical transmembrane segment spans residues 276–297 (YTIWGYVFAKANAVYNPIVYAI). Position 285 is an N6-(retinylidene)lysine (lysine 285).

Belongs to the G-protein coupled receptor 1 family. Opsin subfamily. As to quaternary structure, homodimer. Interacts with GNAQ. In terms of processing, contains one covalently linked retinal chromophore.

The protein resides in the cell projection. It is found in the rhabdomere membrane. Functionally, photoreceptor required for image-forming vision at low light intensity. Can use both retinal and 3-dehydroretinal as visual pigment. Light-induced isomerization of 11-cis to all-trans retinal triggers a conformational change that activates signaling via G-proteins. Signaling via GNAQ probably mediates the activation of phospholipase C. In Procambarus orcinus (Crayfish), this protein is Rhodopsin (RHO).